Reading from the N-terminus, the 414-residue chain is Mannan endo-1,4-beta-mannosidase 2 (414 aa).

A signal peptide spans 1 to 25; that stretch reads MAYFQRLISCIFVLFLLSLAFACEA. Residues W95 and N210 each coordinate substrate. E211 serves as the catalytic Proton donor. Y288 serves as a coordination point for substrate. The active-site Nucleophile is the E328. Substrate is bound at residue W370.

The protein belongs to the glycosyl hydrolase 5 (cellulase A) family.

It is found in the secreted. It carries out the reaction Random hydrolysis of (1-&gt;4)-beta-D-mannosidic linkages in mannans, galactomannans and glucomannans.. In terms of biological role, possesses endo-beta-mannanase activity in vitro. May be involved in seed germination by weakening the endosperm cap prior to radicle emergence. In Solanum lycopersicum (Tomato), this protein is Mannan endo-1,4-beta-mannosidase 2 (MAN2).